Here is a 536-residue protein sequence, read N- to C-terminus: Copine-1 (536 aa).

2 consecutive C2 domains span residues 1-113 and 122-244; these read MAHC…TLPL and GRGT…ECIH. Positions 21, 27, 79, 81, 91, 152, and 158 each coordinate Ca(2+). Position 170 is an N6-acetyllysine (Lys-170). The Ca(2+) site is built by Asp-213, Asp-215, and Asp-221. The 203-residue stretch at 282–484 folds into the VWFA domain; sequence QINFTVGVDF…AARDIVQFVP (203 aa).

This sequence belongs to the copine family. In terms of assembly, homodimer; homodimerizes via its C2 domains. Interacts with p65/RELA (via N-terminus); this interaction induces proteolytic cleavage of p65/RELA subunit and inhibition of NF-kappa-B transcriptional activity. Interacts (via VWFA domain) with ACTB, CCDC22, MYCBP2, PPP5C, RDX and UBE2O. Ca(2+) is required as a cofactor. In terms of tissue distribution, expressed in liver, brain, heart, intestine, kidney and lung (at protein level).

It localises to the nucleus. It is found in the cytoplasm. The protein resides in the cell membrane. In terms of biological role, calcium-dependent phospholipid-binding protein that plays a role in calcium-mediated intracellular processes. Involved in the TNF-alpha receptor signaling pathway in a calcium-dependent manner. Exhibits calcium-dependent phospholipid binding properties. Plays a role in neuronal progenitor cell differentiation; induces neurite outgrowth via a AKT-dependent signaling cascade and calcium-independent manner. May recruit target proteins to the cell membrane in a calcium-dependent manner. May function in membrane trafficking. Involved in TNF-alpha-induced NF-kappa-B transcriptional repression by inducing endoprotease processing of the transcription factor NF-kappa-B p65/RELA subunit. Also induces endoprotease processing of NF-kappa-B p50/NFKB1, p52/NFKB2, RELB and REL. This Rattus norvegicus (Rat) protein is Copine-1.